We begin with the raw amino-acid sequence, 222 residues long: Superoxide dismutase [Cu-Zn], chloroplastic (222 aa).

The transit peptide at Met-1–Ala-68 directs the protein to the chloroplast. Cu cation contacts are provided by His-114, His-116, and His-131. A disulfide bridge links Cys-125 with Cys-214. Zn(2+) is bound by residues His-131, His-139, His-148, and Asp-151. Cu cation is bound at residue His-188.

This sequence belongs to the Cu-Zn superoxide dismutase family. In terms of assembly, homotetramer. Requires Cu cation as cofactor. It depends on Zn(2+) as a cofactor.

It localises to the plastid. It is found in the chloroplast. It catalyses the reaction 2 superoxide + 2 H(+) = H2O2 + O2. Its function is as follows. Destroys radicals which are normally produced within the cells and which are toxic to biological systems. In Spinacia oleracea (Spinach), this protein is Superoxide dismutase [Cu-Zn], chloroplastic (SODCP).